The chain runs to 200 residues: Histone chaperone asf1a-B (200 aa).

This sequence belongs to the ASF1 family. As to quaternary structure, interacts with histone H3 (including both histone H3.1 and H3.3) and histone H4.

Its subcellular location is the nucleus. Histone chaperone that facilitates histone deposition and histone exchange and removal during nucleosome assembly and disassembly. This is Histone chaperone asf1a-B (asf1ab) from Xenopus laevis (African clawed frog).